Reading from the N-terminus, the 378-residue chain is Ribosomal RNA large subunit methyltransferase G (378 aa).

Belongs to the methyltransferase superfamily. RlmG family.

Its subcellular location is the cytoplasm. It carries out the reaction guanosine(1835) in 23S rRNA + S-adenosyl-L-methionine = N(2)-methylguanosine(1835) in 23S rRNA + S-adenosyl-L-homocysteine + H(+). Specifically methylates the guanine in position 1835 (m2G1835) of 23S rRNA. This Salmonella paratyphi A (strain ATCC 9150 / SARB42) protein is Ribosomal RNA large subunit methyltransferase G.